A 93-amino-acid polypeptide reads, in one-letter code: Small ribosomal subunit protein uS19 (93 aa).

Belongs to the universal ribosomal protein uS19 family.

In terms of biological role, protein S19 forms a complex with S13 that binds strongly to the 16S ribosomal RNA. The sequence is that of Small ribosomal subunit protein uS19 from Acidothermus cellulolyticus (strain ATCC 43068 / DSM 8971 / 11B).